The chain runs to 178 residues: Endoribonuclease YbeY (178 aa).

Positions 118, 122, and 128 each coordinate Zn(2+).

It belongs to the endoribonuclease YbeY family. It depends on Zn(2+) as a cofactor.

The protein resides in the cytoplasm. Single strand-specific metallo-endoribonuclease involved in late-stage 70S ribosome quality control and in maturation of the 3' terminus of the 16S rRNA. The sequence is that of Endoribonuclease YbeY from Mycobacterium leprae (strain Br4923).